The chain runs to 1282 residues: Ribosome biogenesis protein BMS1 homolog (1282 aa).

Over residues 1–24 (MEAKDQKKHRKKNSGPKAAKKKKR) the composition is skewed to basic residues. The disordered stretch occupies residues 1-43 (MEAKDQKKHRKKNSGPKAAKKKKRLLQDLQLGDEEDARKRNPK). Lysine 43 participates in a covalent cross-link: Glycyl lysine isopeptide (Lys-Gly) (interchain with G-Cter in SUMO2). The 166-residue stretch at 80-245 (PPPIVVVVMG…GRFITVMKFR (166 aa)) folds into the Bms1-type G domain. Positions 89–96 (GPPKVGKS) are G1. 89-96 (GPPKVGKS) contributes to the ATP binding site. The segment at 117-121 (PVTIV) is G2. The segment at 132-135 (ECGC) is G3. The G4 stretch occupies residues 184–187 (THLD). The residue at position 188 (serine 188) is a Phosphoserine. Residues 219-228 (LSGMVHGEYQ) are G5. Disordered regions lie at residues 397-557 (DSKP…ANCQ) and 575-667 (PTFD…ALKW). Glycyl lysine isopeptide (Lys-Gly) (interchain with G-Cter in SUMO2) cross-links involve residues lysine 399 and lysine 415. Acidic residues-rich tracts occupy residues 434-472 (GDEDESGDSDDEEDDEMSEDDGLENGSSDEEAEEEENAE) and 503-531 (DSDDDLERSSAEEGEAEEADESSEEEDCT). Over residues 535 to 550 (KGISGSKAAGEGSKAG) the composition is skewed to low complexity. Residue serine 552 is modified to Phosphoserine. Acidic residues predominate over residues 588 to 610 (FASEDESEESSSLSAEEEDSENE). A phosphoserine mark is found at serine 625 and serine 639. Lysine 646 is covalently cross-linked (Glycyl lysine isopeptide (Lys-Gly) (interchain with G-Cter in SUMO2)). Residues 653–667 (EENNDSKETSGALKW) show a composition bias toward basic and acidic residues. Threonine 708 carries the phosphothreonine modification. 2 disordered regions span residues 787–822 (ETGDVHKGKSGPNTQNEDIEKEVKEEIDPDEEESAK) and 1178–1202 (NKPKTQAKAGKVPKDRRRPAVIREP). Lysine 810 is covalently cross-linked (Glycyl lysine isopeptide (Lys-Gly) (interchain with G-Cter in SUMO1); alternate). Lysine 810 is covalently cross-linked (Glycyl lysine isopeptide (Lys-Gly) (interchain with G-Cter in SUMO2); alternate). Lysine 1206 participates in a covalent cross-link: Glycyl lysine isopeptide (Lys-Gly) (interchain with G-Cter in SUMO2). Positions 1219-1282 (SQKMKKAKEQ…SLKGAEGQLQ (64 aa)) are disordered. Residues 1228–1248 (QRHLHNKEHFRAKQKEEEEKL) are compositionally biased toward basic and acidic residues. Over residues 1249–1259 (KRQKDLRKKLF) the composition is skewed to basic residues.

This sequence belongs to the TRAFAC class translation factor GTPase superfamily. Bms1-like GTPase family. BMS1 subfamily. Part of the small subunit (SSU) processome, composed of more than 70 proteins and the RNA chaperone small nucleolar RNA (snoRNA) U3. Interacts with RCL1.

The protein localises to the nucleus. The protein resides in the nucleolus. It carries out the reaction GTP + H2O = GDP + phosphate + H(+). In terms of biological role, GTPase required for the synthesis of 40S ribosomal subunits and for processing of pre-ribosomal RNA (pre-rRNA) at sites A0, A1, and A2. Controls access of pre-rRNA intermediates to RCL1 during ribosome biogenesis by binding RCL1 in a GTP-dependent manner, and delivering it to pre-ribosomes. GTP-binding and/or GTP hydrolysis may induce conformational rearrangements within the BMS1-RCL1 complex allowing the interaction of RCL1 with its RNA substrate. Required for RCL1 import into the nucleus. In Homo sapiens (Human), this protein is Ribosome biogenesis protein BMS1 homolog.